The following is a 126-amino-acid chain: Basic phospholipase A2 1 (126 aa).

A propeptide spanning residues 1–7 (SNRPMPL) is cleaved from the precursor. 7 disulfide bridges follow: cysteine 18/cysteine 78, cysteine 33/cysteine 125, cysteine 35/cysteine 51, cysteine 50/cysteine 106, cysteine 57/cysteine 99, cysteine 67/cysteine 92, and cysteine 85/cysteine 97. Residues tyrosine 34, glycine 36, and glycine 38 each contribute to the Ca(2+) site. The active site involves histidine 54. Aspartate 55 lines the Ca(2+) pocket. Residue aspartate 100 is part of the active site.

It belongs to the phospholipase A2 family. Group I subfamily. D49 sub-subfamily. As to quaternary structure, heterodimer formed between two homologous isoforms: isoform 1 and isoform 2. It depends on Ca(2+) as a cofactor. As to expression, expressed by the venom gland.

The protein localises to the secreted. The catalysed reaction is a 1,2-diacyl-sn-glycero-3-phosphocholine + H2O = a 1-acyl-sn-glycero-3-phosphocholine + a fatty acid + H(+). Its function is as follows. PLA2 catalyzes the calcium-dependent hydrolysis of the 2-acyl groups in 3-sn-phosphoglycerides. The chain is Basic phospholipase A2 1 from Naja sagittifera (Andaman cobra).